Reading from the N-terminus, the 578-residue chain is Adenine deaminase (578 aa).

It belongs to the metallo-dependent hydrolases superfamily. Adenine deaminase family. The cofactor is Mn(2+).

The catalysed reaction is adenine + H2O + H(+) = hypoxanthine + NH4(+). The protein is Adenine deaminase of Ligilactobacillus salivarius (strain UCC118) (Lactobacillus salivarius).